Here is a 131-residue protein sequence, read N- to C-terminus: Heterochromatin silencing protein rss1 (131 aa).

Monomer.

The protein resides in the cytoplasm. Its subcellular location is the nucleus. Functionally, required for heterochromatin silencing within pericentromeric repeats and at telomers. Facilitates the recruitment of Clr6 histone deacetylase (HDAC) by interacting with histones. Also interacts with Rad25, which mediates heterochromatin silencing in DNA repeats by recruiting the RITS complex. Together with Rad25, forms a regulatory hub that defines heterochromatin silencing within tandem repeats via linking RNAi and HDAC. The chain is Heterochromatin silencing protein rss1 (rss1) from Schizosaccharomyces pombe (strain 972 / ATCC 24843) (Fission yeast).